We begin with the raw amino-acid sequence, 232 residues long: MSIVNSVRAQIPPIHREGYPFVGGFALVTLILFWIWSPLGWIGTVLTIWCAYFFRNPARTTPVRDGLVVSPADGRVSMVVDIIPPPELGLGAKPLPRVSIFMSVFNCHVNRSPVAGRIERIVYSPGKFINAELDKASEDNERNSMVLSTEHGQIGVIQIAGLIARRIVSFVREGQPLVAGERFGLIRFGSRLDVYLPEGTKPLVAEGQTAIAGETILADLKGGDAGRTYRTD.

The active-site Schiff-base intermediate with substrate; via pyruvic acid is Ser-190. The residue at position 190 (Ser-190) is a Pyruvic acid (Ser); by autocatalysis.

This sequence belongs to the phosphatidylserine decarboxylase family. PSD-A subfamily. In terms of assembly, heterodimer of a large membrane-associated beta subunit and a small pyruvoyl-containing alpha subunit. Requires pyruvate as cofactor. In terms of processing, is synthesized initially as an inactive proenzyme. Formation of the active enzyme involves a self-maturation process in which the active site pyruvoyl group is generated from an internal serine residue via an autocatalytic post-translational modification. Two non-identical subunits are generated from the proenzyme in this reaction, and the pyruvate is formed at the N-terminus of the alpha chain, which is derived from the carboxyl end of the proenzyme. The post-translation cleavage follows an unusual pathway, termed non-hydrolytic serinolysis, in which the side chain hydroxyl group of the serine supplies its oxygen atom to form the C-terminus of the beta chain, while the remainder of the serine residue undergoes an oxidative deamination to produce ammonia and the pyruvoyl prosthetic group on the alpha chain.

It is found in the cell membrane. The enzyme catalyses a 1,2-diacyl-sn-glycero-3-phospho-L-serine + H(+) = a 1,2-diacyl-sn-glycero-3-phosphoethanolamine + CO2. The protein operates within phospholipid metabolism; phosphatidylethanolamine biosynthesis; phosphatidylethanolamine from CDP-diacylglycerol: step 2/2. Catalyzes the formation of phosphatidylethanolamine (PtdEtn) from phosphatidylserine (PtdSer). In Rhodopseudomonas palustris (strain ATCC BAA-98 / CGA009), this protein is Phosphatidylserine decarboxylase proenzyme.